We begin with the raw amino-acid sequence, 403 residues long: Esterase LipC (403 aa).

Active-site residues include Ser237, Asp334, and His367.

Belongs to the 'GDXG' lipolytic enzyme family.

It is found in the cell surface. The protein resides in the secreted. It localises to the cell wall. The protein localises to the capsule. The enzyme catalyses a fatty acid ester + H2O = an aliphatic alcohol + a fatty acid + H(+). It carries out the reaction a butanoate ester + H2O = an aliphatic alcohol + butanoate + H(+). It catalyses the reaction a hexanoate ester + H2O = an aliphatic alcohol + hexanoate + H(+). The catalysed reaction is an acetyl ester + H2O = an aliphatic alcohol + acetate + H(+). The enzyme catalyses an octanoate ester + H2O = an aliphatic alcohol + octanoate + H(+). It carries out the reaction decanoate ester + H2O = decanoate + an aliphatic alcohol + H(+). Its function is as follows. Esterase that can hydrolyze short-chain esters with the carbon chain containing 2 to 10 carbon atoms. Does not have lipase activity. Is highly immunogenic and elicits strong humoral immune responses in both HIV-negative (HIV-) and HIV-positive (HIV+) tuberculosis (TB) patients. Also elicits pro-inflammatory cytokine and chemokine responses from macrophages and pulmonary epithelial cells. May participate in the progression of active tuberculosis both by contributing to the utilization of lipid substrates for bacterial growth and replication, and by modulating immune responses. The chain is Esterase LipC from Mycobacterium tuberculosis (strain ATCC 25618 / H37Rv).